A 266-amino-acid polypeptide reads, in one-letter code: Thymidylate synthase (266 aa).

DUMP is bound at residue arginine 24. Histidine 54 provides a ligand contact to (6R)-5,10-methylene-5,6,7,8-tetrahydrofolate. 129-130 (RR) contributes to the dUMP binding site. The active-site Nucleophile is the cysteine 149. Residues 169-172 (RSAD), asparagine 180, and 210-212 (HIY) each bind dUMP. Aspartate 172 serves as a coordination point for (6R)-5,10-methylene-5,6,7,8-tetrahydrofolate. Residue alanine 265 participates in (6R)-5,10-methylene-5,6,7,8-tetrahydrofolate binding.

Belongs to the thymidylate synthase family. Bacterial-type ThyA subfamily. Homodimer.

It is found in the cytoplasm. The enzyme catalyses dUMP + (6R)-5,10-methylene-5,6,7,8-tetrahydrofolate = 7,8-dihydrofolate + dTMP. Its pathway is pyrimidine metabolism; dTTP biosynthesis. Functionally, catalyzes the reductive methylation of 2'-deoxyuridine-5'-monophosphate (dUMP) to 2'-deoxythymidine-5'-monophosphate (dTMP) while utilizing 5,10-methylenetetrahydrofolate (mTHF) as the methyl donor and reductant in the reaction, yielding dihydrofolate (DHF) as a by-product. This enzymatic reaction provides an intracellular de novo source of dTMP, an essential precursor for DNA biosynthesis. This Mycobacterium ulcerans (strain Agy99) protein is Thymidylate synthase.